Here is a 343-residue protein sequence, read N- to C-terminus: Probable 3',5'-cyclic-nucleotide phosphodiesterase (343 aa).

The first 36 residues, 1–36 (MKYLSIKSASDKIKSGLLKTGVILSFSLFSSLSTAA), serve as a signal peptide directing secretion.

Belongs to the cyclic nucleotide phosphodiesterase class-II family.

The protein resides in the periplasm. The catalysed reaction is a nucleoside 3',5'-cyclic phosphate + H2O = a nucleoside 5'-phosphate + H(+). This is Probable 3',5'-cyclic-nucleotide phosphodiesterase (cpdP) from Yersinia pestis.